The primary structure comprises 156 residues: Deoxyuridine 5'-triphosphate nucleotidohydrolase (156 aa).

Substrate is bound by residues 76–78, Asn89, 93–95, and Lys103; these read RSG and TVD.

It belongs to the dUTPase family. Requires Mg(2+) as cofactor.

It catalyses the reaction dUTP + H2O = dUMP + diphosphate + H(+). Its pathway is pyrimidine metabolism; dUMP biosynthesis; dUMP from dCTP (dUTP route): step 2/2. In terms of biological role, this enzyme is involved in nucleotide metabolism: it produces dUMP, the immediate precursor of thymidine nucleotides and it decreases the intracellular concentration of dUTP so that uracil cannot be incorporated into DNA. This Rhizobium etli (strain ATCC 51251 / DSM 11541 / JCM 21823 / NBRC 15573 / CFN 42) protein is Deoxyuridine 5'-triphosphate nucleotidohydrolase.